The following is a 2006-amino-acid chain: Sodium channel protein type 2 subunit alpha (2006 aa).

Position 4 is a phosphoserine (Ser-4). The tract at residues 28–61 is disordered; sequence RIAEEKAKRPKQERKDEDDENGPKPNSDLEAGKS. Lys-38 is covalently cross-linked (Glycyl lysine isopeptide (Lys-Gly) (interchain with G-Cter in SUMO1)). The stretch at 111–456 is one I repeat; that stretch reads ILTPFNPIRK…QQMLEQLKKQ (346 aa). Residues 130-148 form a helical membrane-spanning segment; that stretch reads LFNVLIMCTILTNCVFMTM. The chain crosses the membrane as a helical span at residues 156–176; the sequence is KNVEYTFTGIYTFESLIKILA. Residues 191-208 traverse the membrane as a helical segment; that stretch reads WNWLDFTVITFAYVTEFV. A helical membrane pass occupies residues 215-231; that stretch reads ALRTFRVLRALKTISVI. A helical membrane pass occupies residues 251–270; sequence VMILTVFCLSVFALIGLQLF. Cys-278 and Cys-338 form a disulfide bridge. N-linked (GlcNAc...) asparagine glycosylation is found at Asn-285, Asn-291, Asn-297, Asn-303, Asn-308, and Asn-340. The segment at residues 370-394 is an intramembrane region (pore-forming); it reads FSWAFLSLFRLMTQDFWENLYQLTL. The chain crosses the membrane as a helical span at residues 402–422; the sequence is MIFFVLVIFLGSFYLINLILA. Phosphoserine occurs at positions 468, 471, 484, 526, 528, 531, 553, 554, 558, 573, 576, 589, 610, 623, 687, 688, and 722. Residues 494-529 form a disordered region; sequence SSKSEKELKNRRKKKKQKEQAGEEEKEDAVRKSASE. Positions 511-529 are enriched in basic and acidic residues; that stretch reads KEQAGEEEKEDAVRKSASE. Positions 589-635 are disordered; that stretch reads SENDFADDEHSTFEDNDSRRDSLFVPHRHGERRPSNVSQASRASRGI. Residues 596–610 are compositionally biased toward basic and acidic residues; it reads DEHSTFEDNDSRRDS. The II repeat unit spans residues 742–1014; the sequence is CCKPWLKVKH…QIAVGRMQKG (273 aa). Residues 761 to 779 form a helical membrane-spanning segment; that stretch reads FVDLAITICIVLNTLFMAM. A helical transmembrane segment spans residues 791–810; it reads VLSVGNLVFTGIFTAEMFLK. The chain crosses the membrane as a helical span at residues 825-844; the sequence is NIFDGFIVSLSLMELGLANV. A helical transmembrane segment spans residues 847-864; that stretch reads LSVLRSFRLLRVFKLAKS. Residues 881–899 traverse the membrane as a helical segment; the sequence is ALGNLTLVLAIIVFIFAVV. The cysteines at positions 913 and 919 are disulfide-linked. The interval 918-919 is binds SCN2B; the sequence is DC. Positions 929-949 form an intramembrane region, pore-forming; that stretch reads FFHSFLIVFRVLCGEWIETMW. A disulfide bond links Cys-951 and Cys-960. A helical membrane pass occupies residues 963–983; that stretch reads VFMMVMVIGNLVVLNLFLALL. Positions 1121-1167 are disordered; the sequence is EEFSSESDMEESKEKLNATSSSEGSTVDIGAPAEGEQPEAEPEESLE. The segment covering 1156-1167 has biased composition (acidic residues); that stretch reads EQPEAEPEESLE. The III repeat unit spans residues 1191–1505; that stretch reads KGKLWWNLRK…KKYYNAMKKL (315 aa). Residues 1211-1228 traverse the membrane as a helical segment; the sequence is FETFIVFMILLSSGALAF. A helical transmembrane segment spans residues 1242 to 1260; that stretch reads MLEYADKVFTYIFILEMLL. Residues 1275–1293 form a helical membrane-spanning segment; sequence WCWLDFLIVDVSLVSLTAN. A helical transmembrane segment spans residues 1302 to 1320; that stretch reads AIKSLRTLRALRPLRALSR. A helical membrane pass occupies residues 1338-1357; that stretch reads IMNVLLVCLIFWLIFSIMGV. Cys-1367 and Cys-1387 are disulfide-bonded. Positions 1410-1431 form an intramembrane region, pore-forming; that stretch reads GLGYLSLLQVATFKGWMDIMYA. Residues 1449–1470 form a helical membrane-spanning segment; the sequence is YMYLYFVIFIIFGSFFTLNLFI. Ser-1507 is modified (phosphoserine). The stretch at 1514-1812 is one IV repeat; that stretch reads IPRPANKFQG…WEKFDPDATQ (299 aa). Residues 1534–1551 traverse the membrane as a helical segment; that stretch reads FDISIMILICLNMVTMMV. Residues 1563–1581 traverse the membrane as a helical segment; it reads ILYWINLVFIVLFTGECVL. Residues 1594-1611 form a helical membrane-spanning segment; sequence GWNIFDFVVVILSIVGMF. A helical transmembrane segment spans residues 1625-1641; sequence LFRVIRLARIGRILRLI. The helical transmembrane segment at 1661–1678 threads the bilayer; that stretch reads LFNIGLLLFLVMFIYAIF. Residues 1701 to 1723 constitute an intramembrane region (pore-forming); it reads FGNSMICLFQITTSAGWDGLLAP. Cys-1732 and Cys-1747 are oxidised to a cystine. A helical membrane pass occupies residues 1754–1776; the sequence is IFFFVSYIIISFLVVVNMYIAVI. Positions 1906 to 1935 constitute an IQ domain; the sequence is EEVSAIVIQRAYRRYLLKQKVKKVSSIYKK. Ser-1931 bears the Phosphoserine mark. Basic and acidic residues predominate over residues 1934–1965; the sequence is KKDKGKEDEGTPIKEDIITDKLNENSTPEKTD. Positions 1934–2006 are disordered; it reads KKDKGKEDEG…KGKDIRESKK (73 aa). Phosphothreonine is present on residues Thr-1944, Thr-1964, and Thr-1967. Position 1972 is a phosphoserine (Ser-1972). Residues 1980 to 2006 are compositionally biased toward basic and acidic residues; sequence TKPEKEKFEKDKSEKEDKGKDIRESKK.

It belongs to the sodium channel (TC 1.A.1.10) family. Nav1.2/SCN2A subfamily. As to quaternary structure, heterooligomer of a large alpha subunit and a smaller beta subunit. Heterooligomer with SCN2B or SCN4B; disulfide-linked. Interacts with NEDD4L. Interacts with CALM. Interacts with TMEM233. In terms of processing, sumoylated at Lys-38. Sumoylation is induced by hypoxia, increases voltage-gated sodium current and mediates the early response to acute hypoxia in neurons. Sumoylated SCN2A is located at the cell membrane. Expressed in brain (at protein level). Detected in hippocampus, cortex and brain stem.

It localises to the cell membrane. The catalysed reaction is Na(+)(in) = Na(+)(out). Its function is as follows. Mediates the voltage-dependent sodium ion permeability of excitable membranes. Assuming opened or closed conformations in response to the voltage difference across the membrane, the protein forms a sodium-selective channel through which Na(+) ions may pass in accordance with their electrochemical gradient. Implicated in the regulation of hippocampal replay occurring within sharp wave ripples (SPW-R) important for memory. This chain is Sodium channel protein type 2 subunit alpha, found in Mus musculus (Mouse).